The following is a 298-amino-acid chain: Lipoyl synthase (298 aa).

[4Fe-4S] cluster is bound by residues cysteine 40, cysteine 45, cysteine 51, cysteine 67, cysteine 71, cysteine 74, and serine 280. The Radical SAM core domain occupies 53-269 (AVRKTATFMI…KEIALSKGFS (217 aa)).

The protein belongs to the radical SAM superfamily. Lipoyl synthase family. It depends on [4Fe-4S] cluster as a cofactor.

The protein localises to the cytoplasm. The enzyme catalyses [[Fe-S] cluster scaffold protein carrying a second [4Fe-4S](2+) cluster] + N(6)-octanoyl-L-lysyl-[protein] + 2 oxidized [2Fe-2S]-[ferredoxin] + 2 S-adenosyl-L-methionine + 4 H(+) = [[Fe-S] cluster scaffold protein] + N(6)-[(R)-dihydrolipoyl]-L-lysyl-[protein] + 4 Fe(3+) + 2 hydrogen sulfide + 2 5'-deoxyadenosine + 2 L-methionine + 2 reduced [2Fe-2S]-[ferredoxin]. It functions in the pathway protein modification; protein lipoylation via endogenous pathway; protein N(6)-(lipoyl)lysine from octanoyl-[acyl-carrier-protein]. Catalyzes the radical-mediated insertion of two sulfur atoms into the C-6 and C-8 positions of the octanoyl moiety bound to the lipoyl domains of lipoate-dependent enzymes, thereby converting the octanoylated domains into lipoylated derivatives. The protein is Lipoyl synthase of Bacillus thuringiensis (strain Al Hakam).